Here is a 2157-residue protein sequence, read N- to C-terminus: Genome polyprotein (2157 aa).

Gly2 carries the N-myristoyl glycine; by host lipid modification. The Cytoplasmic segment spans residues 2 to 1470 (GAQVSRQNVG…DLSIANSIIT (1469 aa)). The tract at residues 567-584 (PIEQNPVENYIDEVLNEV) is amphipathic alpha-helix. Active-site for protease 2A activity residues include His875 and Asp892. Residues Cys909 and Cys911 each coordinate Zn(2+). Residue Cys963 is the For protease 2A activity of the active site. Cys969 and His971 together coordinate Zn(2+). A membrane-binding region spans residues 1095 to 1164 (SDSWLKKFTE…NLRAADNATQ (70 aa)). The interval 1095–1228 (SDSWLKKFTE…PPGTGKSITT (134 aa)) is oligomerization. Residues 1116 to 1120 (GNKIS) are RNA-binding. The SF3 helicase domain occupies 1188–1350 (EAKRIKVLYN…YKDAQGKLNV (163 aa)). The Zn(2+) site is built by Cys1357, Cys1368, and Cys1373. The C4-type; degenerate zinc finger occupies 1357-1373 (CNVNTKIGNAKCCPFVC). An RNA-binding region spans residues 1400–1407 (EDKRRRQV). The oligomerization stretch occupies residues 1411–1416 (MSAIFQ). An intramembrane segment occupies 1471 to 1486 (IIANIISIAGIIFVIY). Over 1487–2157 (KLFCTLQGPY…LLKHEWYEKF (671 aa)) the chain is Cytoplasmic. Position 1496 is an O-(5'-phospho-RNA)-tyrosine (Tyr1496). Residues 1515–1693 (GPEEEFGRSI…FSAMLLRSYF (179 aa)) form the Peptidase C3 domain. Residues His1554, Glu1585, and Cys1661 each act as for protease 3C activity in the active site. The RdRp catalytic domain occupies 1925 to 2038 (DCIMAFDYTN…SYKYTLDMEA (114 aa)). Asp1931 and Asp2024 together coordinate Mg(2+).

The protein belongs to the picornaviruses polyprotein family. In terms of assembly, interacts with capsid protein VP1 and capsid protein VP3 to form heterotrimeric protomers. Interacts with capsid protein VP0, and capsid protein VP3 to form heterotrimeric protomers. Five protomers subsequently associate to form pentamers which serve as building blocks for the capsid. Interacts with capsid protein VP2, capsid protein VP3 and capsid protein VP4 following cleavage of capsid protein VP0. As to quaternary structure, interacts with capsid protein VP1 and capsid protein VP3 in the mature capsid. In terms of assembly, interacts with capsid protein VP0 and capsid protein VP1 to form heterotrimeric protomers. Five protomers subsequently associate to form pentamers which serve as building blocks for the capsid. Interacts with capsid protein VP4 in the mature capsid. Interacts with protein 2C; this interaction may be important for virion morphogenesis. Interacts with capsid protein VP1 and capsid protein VP3. As to quaternary structure, homodimer. In terms of assembly, homohexamer; forms a hexameric ring structure with 6-fold symmetry characteristic of AAA+ ATPases. Interacts (via N-terminus) with host RTN3 (via reticulon domain); this interaction is important for viral replication. Interacts with capsid protein VP3; this interaction may be important for virion morphogenesis. Interacts with protein 3CD. As to quaternary structure, homodimer. Interacts with host GBF1. Interacts (via GOLD domain) with host ACBD3 (via GOLD domain); this interaction allows the formation of a viral protein 3A/ACBD3 heterotetramer with a 2:2 stoichiometry, which will stimulate the recruitment of host PI4KB in order to synthesize PI4P at the viral RNA replication sites. In terms of assembly, interacts with RNA-directed RNA polymerase. Interacts with protein 3AB and with RNA-directed RNA polymerase. As to quaternary structure, interacts with Viral protein genome-linked and with protein 3CD. The cofactor is Mg(2+). In terms of processing, specific enzymatic cleavages in vivo by the viral proteases yield processing intermediates and the mature proteins. Post-translationally, myristoylation is required for the formation of pentamers during virus assembly. Further assembly of 12 pentamers and a molecule of genomic RNA generates the provirion. During virion maturation, immature virions are rendered infectious following cleavage of VP0 into VP4 and VP2. This maturation seems to be an autocatalytic event triggered by the presence of RNA in the capsid and it is followed by a conformational change infectious virion. In terms of processing, myristoylation is required during RNA encapsidation and formation of the mature virus particle. Post-translationally, VPg is uridylylated by the polymerase into VPg-pUpU. This acts as a nucleotide-peptide primer for the genomic RNA replication.

The protein localises to the virion. It is found in the host cytoplasm. Its subcellular location is the host cytoplasmic vesicle membrane. The protein resides in the host nucleus. It carries out the reaction a ribonucleoside 5'-triphosphate + H2O = a ribonucleoside 5'-diphosphate + phosphate + H(+). The catalysed reaction is Selective cleavage of Tyr-|-Gly bond in the picornavirus polyprotein.. The enzyme catalyses RNA(n) + a ribonucleoside 5'-triphosphate = RNA(n+1) + diphosphate. It catalyses the reaction Selective cleavage of Gln-|-Gly bond in the poliovirus polyprotein. In other picornavirus reactions Glu may be substituted for Gln, and Ser or Thr for Gly.. With respect to regulation, replication or transcription is subject to high level of random mutations by the nucleotide analog ribavirin. Its function is as follows. Forms an icosahedral capsid of pseudo T=3 symmetry with capsid proteins VP2 and VP3. The capsid is 300 Angstroms in diameter, composed of 60 copies of each capsid protein and enclosing the viral positive strand RNA genome. Capsid protein VP1 mainly forms the vertices of the capsid. Capsid protein VP1 interacts with host cell receptor to provide virion attachment to target host cells. This attachment induces virion internalization. Tyrosine kinases are probably involved in the entry process. After binding to its receptor, the capsid undergoes conformational changes. Capsid protein VP1 N-terminus (that contains an amphipathic alpha-helix) and capsid protein VP4 are externalized. Together, they shape a pore in the host membrane through which viral genome is translocated to host cell cytoplasm. Functionally, forms an icosahedral capsid of pseudo T=3 symmetry with capsid proteins VP2 and VP3. The capsid is 300 Angstroms in diameter, composed of 60 copies of each capsid protein and enclosing the viral positive strand RNA genome. In terms of biological role, lies on the inner surface of the capsid shell. After binding to the host receptor, the capsid undergoes conformational changes. Capsid protein VP4 is released, Capsid protein VP1 N-terminus is externalized, and together, they shape a pore in the host membrane through which the viral genome is translocated into the host cell cytoplasm. Component of immature procapsids, which is cleaved into capsid proteins VP4 and VP2 after maturation. Allows the capsid to remain inactive before the maturation step. Its function is as follows. Cysteine protease that cleaves viral polyprotein and specific host proteins. It is responsible for the autocatalytic cleavage between the P1 and P2 regions, which is the first cleavage occurring in the polyprotein. Also cleaves the host translation initiation factor EIF4G1, in order to shut down the capped cellular mRNA translation. Inhibits the host nucleus-cytoplasm protein and RNA trafficking by cleaving host members of the nuclear pores. Counteracts stress granule formation probably by antagonizing its assembly or promoting its dissassembly. Functionally, plays an essential role in the virus replication cycle by acting as a viroporin. Creates a pore in the host endoplasmic reticulum and as a consequence releases Ca2+ in the cytoplasm of infected cell. In turn, high levels of cytoplasmic calcium may trigger membrane trafficking and transport of viral ER-associated proteins to viroplasms, sites of viral genome replication. In terms of biological role, induces and associates with structural rearrangements of intracellular membranes. Displays RNA-binding, nucleotide binding and NTPase activities. May play a role in virion morphogenesis and viral RNA encapsidation by interacting with the capsid protein VP3. Localizes the viral replication complex to the surface of membranous vesicles. Together with protein 3CD binds the Cis-Active RNA Element (CRE) which is involved in RNA synthesis initiation. Acts as a cofactor to stimulate the activity of 3D polymerase, maybe through a nucleid acid chaperone activity. Its function is as follows. Localizes the viral replication complex to the surface of membranous vesicles. It inhibits host cell endoplasmic reticulum-to-Golgi apparatus transport and causes the disassembly of the Golgi complex, possibly through GBF1 interaction. This would result in depletion of MHC, trail receptors and IFN receptors at the host cell surface. Plays an essential role in viral RNA replication by recruiting ACBD3 and PI4KB at the viral replication sites, thereby allowing the formation of the rearranged membranous structures where viral replication takes place. Functionally, acts as a primer for viral RNA replication and remains covalently bound to viral genomic RNA. VPg is uridylylated prior to priming replication into VPg-pUpU. The oriI viral genomic sequence may act as a template for this. The VPg-pUpU is then used as primer on the genomic RNA poly(A) by the RNA-dependent RNA polymerase to replicate the viral genome. During genome replication, the VPg-RNA linkage is removed by the host TDP2, thereby accelerating replication. During the late stage of the replication cycle, host TDP2 is excluded from sites of viral RNA synthesis and encapsidation, allowing for the generation of progeny virions. In terms of biological role, involved in the viral replication complex and viral polypeptide maturation. It exhibits protease activity with a specificity and catalytic efficiency that is different from protease 3C. Protein 3CD lacks polymerase activity. Protein 3CD binds to the 5'UTR of the viral genome. Replicates the viral genomic RNA on the surface of intracellular membranes. May form linear arrays of subunits that propagate along a strong head-to-tail interaction called interface-I. Covalently attaches UMP to a tyrosine of VPg, which is used to prime RNA synthesis. The positive stranded RNA genome is first replicated at virus induced membranous vesicles, creating a dsRNA genomic replication form. This dsRNA is then used as template to synthesize positive stranded RNA genomes. ss(+)RNA genomes are either translated, replicated or encapsidated. Its function is as follows. Major viral protease that mediates proteolytic processing of the polyprotein. Cleaves host EIF5B, contributing to host translation shutoff. Also cleaves host PABPC1, contributing to host translation shutoff. Cleaves host NLRP1, triggers host N-glycine-mediated degradation of the autoinhibitory NLRP1 N-terminal fragment. This Homo sapiens (Human) protein is Genome polyprotein.